A 199-amino-acid polypeptide reads, in one-letter code: MKFKRDENQNSTHHRGNKNNTNNDDDDKEEEEEIINDTTMPPLNNEEKYFLKKIFPFLPSRSSSSTSKLIFSLILDLVGFFTQIIPIFGFAFWPSISTYLIFKVYGSGLHLCVSFLEETIPGLGFIPTATCCWANEKYNIIPKVDRYLPTRYIKMVRNFISAFKKIAIAVALIAIYKIISYFSPYLPFFGGSKNHQTSY.

Residues 1–41 (MKFKRDENQNSTHHRGNKNNTNNDDDDKEEEEEIINDTTMP) are disordered. The span at 23–35 (NDDDDKEEEEEII) shows a compositional bias: acidic residues. 3 helical membrane passes run 73-93 (LILD…FAFW), 96-116 (ISTY…VSFL), and 166-186 (IAIA…SPYL).

The protein resides in the membrane. This is an uncharacterized protein from Dictyostelium discoideum (Social amoeba).